We begin with the raw amino-acid sequence, 160 residues long: Small ribosomal subunit protein uS9 (160 aa).

This sequence belongs to the universal ribosomal protein uS9 family.

This is Small ribosomal subunit protein uS9 from Rhodopseudomonas palustris (strain ATCC BAA-98 / CGA009).